The primary structure comprises 264 residues: MKQYLDFLKLVKNIGVYKTDRTNTGTTSMFGYQMRFDLSKGFPLVTTKHVHLPSVVYELLWFLNGDTNIKYLQDNGVRIWNEWADENGDLGPVYGTQWRHWKNIKDKSIDQISKVVEQIKNTPNSRRIIVSAWNVGELENMALPPCHVFFQFYVADGKLSCQLYQRSADIFLGVPFNIASYSLLTHMMAQQCDLEVGDFIWSGGDCHIYSNHYKQVEIQLSRTPKALATLKIKRKPENIFDYSFEDFEFVNYIFDAPIKAPVAI.

R21 contacts dUMP. Residue H51 coordinates (6R)-5,10-methylene-5,6,7,8-tetrahydrofolate. 126–127 contributes to the dUMP binding site; the sequence is RR. The Nucleophile role is filled by C146. DUMP is bound by residues 166 to 169, N177, and 207 to 209; these read RSAD and HIY. D169 lines the (6R)-5,10-methylene-5,6,7,8-tetrahydrofolate pocket. (6R)-5,10-methylene-5,6,7,8-tetrahydrofolate is bound at residue A263.

It belongs to the thymidylate synthase family. Bacterial-type ThyA subfamily. In terms of assembly, homodimer.

It localises to the cytoplasm. The enzyme catalyses dUMP + (6R)-5,10-methylene-5,6,7,8-tetrahydrofolate = 7,8-dihydrofolate + dTMP. The protein operates within pyrimidine metabolism; dTTP biosynthesis. Its function is as follows. Catalyzes the reductive methylation of 2'-deoxyuridine-5'-monophosphate (dUMP) to 2'-deoxythymidine-5'-monophosphate (dTMP) while utilizing 5,10-methylenetetrahydrofolate (mTHF) as the methyl donor and reductant in the reaction, yielding dihydrofolate (DHF) as a by-product. This enzymatic reaction provides an intracellular de novo source of dTMP, an essential precursor for DNA biosynthesis. The chain is Thymidylate synthase from Vesicomyosocius okutanii subsp. Calyptogena okutanii (strain HA).